The primary structure comprises 445 residues: Phosphoglucosamine mutase (445 aa).

Catalysis depends on serine 102, which acts as the Phosphoserine intermediate. 4 residues coordinate Mg(2+): serine 102, aspartate 241, aspartate 243, and aspartate 245. Serine 102 is modified (phosphoserine).

The protein belongs to the phosphohexose mutase family. It depends on Mg(2+) as a cofactor. Activated by phosphorylation.

It carries out the reaction alpha-D-glucosamine 1-phosphate = D-glucosamine 6-phosphate. Its function is as follows. Catalyzes the conversion of glucosamine-6-phosphate to glucosamine-1-phosphate. In Rhodococcus jostii (strain RHA1), this protein is Phosphoglucosamine mutase.